Reading from the N-terminus, the 585-residue chain is Probable glucomannan 4-beta-mannosyltransferase 7 (585 aa).

A helical membrane pass occupies residues 87-107; it reads VIAPTLQVAVWVCMVMSVMLV. Asp188 is an active-site residue. Asp247 and Asp249 together coordinate substrate. Residue Asp341 is part of the active site. 4 consecutive transmembrane segments (helical) span residues 420–440, 443–463, 534–554, and 563–583; these read VVAP…SVMI, LFIP…ITTI, LPEI…LIFH, and LYLQ…NFAC.

This sequence belongs to the glycosyltransferase 2 family. Plant cellulose synthase-like A subfamily.

It is found in the golgi apparatus membrane. The enzyme catalyses GDP-mannose + (glucomannan)n = GDP + (glucomannan)n+1.. In terms of biological role, probable mannan synthase which consists of a 4-beta-mannosyltransferase activity on mannan using GDP-mannose. The beta-1,4-mannan product is the backbone for galactomannan synthesis by galactomannan galactosyltransferase. Galactomannan is a noncellulosic polysaccharides of plant cell wall. The sequence is that of Probable glucomannan 4-beta-mannosyltransferase 7 from Oryza sativa subsp. japonica (Rice).